The primary structure comprises 129 residues: Small ribosomal subunit protein uS11 (129 aa).

It belongs to the universal ribosomal protein uS11 family. Part of the 30S ribosomal subunit. Interacts with proteins S7 and S18. Binds to IF-3.

Located on the platform of the 30S subunit, it bridges several disparate RNA helices of the 16S rRNA. Forms part of the Shine-Dalgarno cleft in the 70S ribosome. This is Small ribosomal subunit protein uS11 from Methylobacterium nodulans (strain LMG 21967 / CNCM I-2342 / ORS 2060).